Consider the following 171-residue polypeptide: Large ribosomal subunit protein uL10 (171 aa).

Belongs to the universal ribosomal protein uL10 family. Part of the ribosomal stalk of the 50S ribosomal subunit. The N-terminus interacts with L11 and the large rRNA to form the base of the stalk. The C-terminus forms an elongated spine to which L12 dimers bind in a sequential fashion forming a multimeric L10(L12)X complex.

Functionally, forms part of the ribosomal stalk, playing a central role in the interaction of the ribosome with GTP-bound translation factors. The chain is Large ribosomal subunit protein uL10 from Hyphomonas neptunium (strain ATCC 15444).